The chain runs to 667 residues: DNA ligase (667 aa).

NAD(+)-binding positions include 32-36, 81-82, and Glu110; these read DSEYD and SL. Residue Lys112 is the N6-AMP-lysine intermediate of the active site. Residues Arg133, Glu167, Lys283, and Lys307 each contribute to the NAD(+) site. Zn(2+) contacts are provided by Cys401, Cys404, Cys419, and Cys424. One can recognise a BRCT domain in the interval 586-667; sequence EGHPEFSGKT…FVDKQNELNS (82 aa).

Belongs to the NAD-dependent DNA ligase family. LigA subfamily. Mg(2+) is required as a cofactor. It depends on Mn(2+) as a cofactor.

It carries out the reaction NAD(+) + (deoxyribonucleotide)n-3'-hydroxyl + 5'-phospho-(deoxyribonucleotide)m = (deoxyribonucleotide)n+m + AMP + beta-nicotinamide D-nucleotide.. Its function is as follows. DNA ligase that catalyzes the formation of phosphodiester linkages between 5'-phosphoryl and 3'-hydroxyl groups in double-stranded DNA using NAD as a coenzyme and as the energy source for the reaction. It is essential for DNA replication and repair of damaged DNA. The chain is DNA ligase from Staphylococcus aureus (strain MRSA252).